Here is a 297-residue protein sequence, read N- to C-terminus: MRLHFTKMQGAGNDFVVLDATRAPLALSAADYRFLGDRRFGVGADQILVVERSTTPGVDFRYRIFNGGSGDEVEQCGNGARCFARFVRDNGLSQQVRVKVETVNSLIELHVEADGRVTVDMNQPIFEHALIPFDSAGLSARPHNGHGNGFELWPLQLPGASLPSVDVAVLSMGNPHAVQRVHDVDTAPVAEIGPRVETHARFPRHVNAGFMQVMSRREVRLRVFERGAGETLACGTGACAAVVAGIRLGWLDPEVDVQTRGGLLTIAWAGLGHPVLMTGPAQTVFTGDIDLPTTSVQ.

The substrate site is built by Asn13, Gln46, and Asn66. Cys76 (proton donor) is an active-site residue. Substrate is bound by residues 77–78, Asn174, Asn207, and 225–226; these read GN and ER. Cys234 acts as the Proton acceptor in catalysis. 235–236 is a substrate binding site; sequence GT.

The protein belongs to the diaminopimelate epimerase family. As to quaternary structure, homodimer.

It localises to the cytoplasm. It catalyses the reaction (2S,6S)-2,6-diaminopimelate = meso-2,6-diaminopimelate. Its pathway is amino-acid biosynthesis; L-lysine biosynthesis via DAP pathway; DL-2,6-diaminopimelate from LL-2,6-diaminopimelate: step 1/1. In terms of biological role, catalyzes the stereoinversion of LL-2,6-diaminopimelate (L,L-DAP) to meso-diaminopimelate (meso-DAP), a precursor of L-lysine and an essential component of the bacterial peptidoglycan. The protein is Diaminopimelate epimerase of Leptothrix cholodnii (strain ATCC 51168 / LMG 8142 / SP-6) (Leptothrix discophora (strain SP-6)).